A 472-amino-acid polypeptide reads, in one-letter code: Glutamine synthetase (472 aa).

Residues 17–101 form the GS beta-grasp domain; sequence YDIKFVLLRF…LRCSIYEPST (85 aa). The GS catalytic domain occupies 109-472; the sequence is PRSIAIRAEN…HPVEFEMYYA (364 aa). Mg(2+) contacts are provided by Glu-134 and Glu-136. Residue Glu-212 participates in ATP binding. Residues Glu-217 and Glu-225 each coordinate Mg(2+). L-glutamate is bound by residues 269–270 and Gly-270; that span reads NG. A Mg(2+)-binding site is contributed by His-274. ATP-binding positions include 276 to 278 and Ser-278; that span reads NMS. Residues Arg-326, Glu-332, and Arg-344 each coordinate L-glutamate. Residues Arg-344, Arg-349, and Lys-357 each coordinate ATP. Glu-362 contributes to the Mg(2+) binding site. Position 364 (Arg-364) interacts with L-glutamate. The residue at position 402 (Tyr-402) is an O-AMP-tyrosine.

The protein belongs to the glutamine synthetase family. Oligomer of 12 subunits arranged in the form of two hexameric ring. Mg(2+) is required as a cofactor.

It is found in the cytoplasm. It carries out the reaction L-glutamate + NH4(+) + ATP = L-glutamine + ADP + phosphate + H(+). Its activity is regulated as follows. The activity of this enzyme could be controlled by adenylation under conditions of abundant glutamine. Catalyzes the ATP-dependent biosynthesis of glutamine from glutamate and ammonia. The polypeptide is Glutamine synthetase (Pasteurella multocida (strain Pm70)).